Here is a 114-residue protein sequence, read N- to C-terminus: U17-barytoxin-Tl1a (114 aa).

A signal peptide spans 1–20; the sequence is MKTIIVFLSLLVLATKFGDA. Positions 21–74 are excised as a propeptide; sequence NEGVNQEQMKEVIQNEFREDFLNEMAAMSLLQQLEAIESTLLEKEADRNSRQKR. 3 disulfide bridges follow: C75/C88, C82/C93, and C87/C108.

Belongs to the neurotoxin 14 (magi-1) family. 03 (ICK-30-40) subfamily. In terms of tissue distribution, expressed by the venom gland.

It is found in the secreted. Its function is as follows. Ion channel inhibitor. This is U17-barytoxin-Tl1a from Trittame loki (Brush-footed trapdoor spider).